The chain runs to 248 residues: Pulmonary surfactant-associated protein A (248 aa).

The N-terminal stretch at 1–20 (MSLGSLAFTLFLTVVAGIKC) is a signal peptide. N21 is a glycosylation site (N-linked (GlcNAc...) asparagine). The Collagen-like domain maps to 28 to 100 (GSPGIPGTPG…PGERGLPGFP (73 aa)). The segment at 28 to 100 (GSPGIPGTPG…PGERGLPGFP (73 aa)) is disordered. 10 positions are modified to 4-hydroxyproline: P30, P33, P36, P42, P54, P57, P63, P67, P70, and P76. Basic and acidic residues predominate over residues 42 to 51 (PGRDGRDGIK). A compositionally biased stretch (pro residues) spans 54 to 65 (PGPPGPMGPPGG). A compositionally biased stretch (low complexity) spans 69-82 (LPGRDGLPGAPGAP). Residues 84-93 (EHGDKGEPGE) show a composition bias toward basic and acidic residues. The 117-residue stretch at 132–248 (LSVGDKVFST…LQYRLAICEF (117 aa)) folds into the C-type lectin domain. 2 disulfide bridges follow: C155-C246 and C224-C238. Residue N207 is glycosylated (N-linked (GlcNAc...) asparagine). Ca(2+) is bound by residues E215, R217, N234, and D235.

It belongs to the SFTPA family. In terms of assembly, oligomeric complex of 6 set of homotrimers.

The protein localises to the secreted. Its subcellular location is the extracellular space. The protein resides in the extracellular matrix. It is found in the surface film. In presence of calcium ions, it binds to surfactant phospholipids and contributes to lower the surface tension at the air-liquid interface in the alveoli of the mammalian lung and is essential for normal respiration. Enhances the expression of MYO18A/SP-R210 on alveolar macrophages. This chain is Pulmonary surfactant-associated protein A (Sftpa1), found in Mus musculus (Mouse).